The following is a 207-amino-acid chain: Ribosomal RNA small subunit methyltransferase G (207 aa).

S-adenosyl-L-methionine contacts are provided by residues G73, L78, 124-125 (VE), and R139.

It belongs to the methyltransferase superfamily. RNA methyltransferase RsmG family.

The protein resides in the cytoplasm. The catalysed reaction is guanosine(527) in 16S rRNA + S-adenosyl-L-methionine = N(7)-methylguanosine(527) in 16S rRNA + S-adenosyl-L-homocysteine. In terms of biological role, specifically methylates the N7 position of guanine in position 527 of 16S rRNA. The chain is Ribosomal RNA small subunit methyltransferase G from Escherichia coli O17:K52:H18 (strain UMN026 / ExPEC).